A 323-amino-acid polypeptide reads, in one-letter code: DNA primase small subunit PriS (323 aa).

Active-site residues include Asp-97, Asp-99, and Asp-274.

This sequence belongs to the eukaryotic-type primase small subunit family. Heterodimer of a small subunit (PriS) and a large subunit (PriL). The cofactor is Mg(2+). Mn(2+) is required as a cofactor.

In terms of biological role, catalytic subunit of DNA primase, an RNA polymerase that catalyzes the synthesis of short RNA molecules used as primers for DNA polymerase during DNA replication. The small subunit contains the primase catalytic core and has DNA synthesis activity on its own. Binding to the large subunit stabilizes and modulates the activity, increasing the rate of DNA synthesis while decreasing the length of the DNA fragments, and conferring RNA synthesis capability. The DNA polymerase activity may enable DNA primase to also catalyze primer extension after primer synthesis. May also play a role in DNA repair. This chain is DNA primase small subunit PriS, found in Methanothermobacter thermautotrophicus (strain ATCC 29096 / DSM 1053 / JCM 10044 / NBRC 100330 / Delta H) (Methanobacterium thermoautotrophicum).